Reading from the N-terminus, the 70-residue chain is Small ribosomal subunit protein bS21 (70 aa).

Belongs to the bacterial ribosomal protein bS21 family.

This chain is Small ribosomal subunit protein bS21, found in Polaromonas naphthalenivorans (strain CJ2).